We begin with the raw amino-acid sequence, 333 residues long: Gap junction alpha-4 protein (333 aa).

Over 1–20 (MGDWGFLEKLLDQVQEHSTV) the chain is Cytoplasmic. The helical transmembrane segment at 21–40 (VGKIWLTVLFIFRILILGLA) threads the bilayer. The Extracellular portion of the chain corresponds to 41–76 (GESVWGDEQSDFECNTAQPGCTNVCYDQAFPISHIR). Residues 77–99 (YWVLQFLFVSTPTLIYLGHVIYL) traverse the membrane as a helical segment. The Cytoplasmic portion of the chain corresponds to 100–148 (SRREERLRQKEGELRALPSKDPHVERALAAIEHQMAKISVAEDGRLRIR). Residues 149 to 171 (GALMGTYVISVLCKSVLEAGFLY) form a helical membrane-spanning segment. Residues 172–208 (GQWRLYGWTMEPVFVCQRAPCPHVVDCYVSRPTEKTI) lie on the Extracellular side of the membrane. A helical membrane pass occupies residues 209-231 (FIIFMLVVGVISLVLNLLELVHL). Residues 232-333 (LCRCVSREIK…NSSASKKQYV (102 aa)) are Cytoplasmic-facing. A disordered region spans residues 292-333 (ANLTTEERLTSTRPPPFVNAAPQGGQKSSSRPNSSASKKQYV). Residues 318 to 333 (KSSSRPNSSASKKQYV) are compositionally biased toward low complexity.

It belongs to the connexin family. Alpha-type (group II) subfamily. In terms of assembly, a connexon is composed of a hexamer of connexins. Highly expressed in lung.

It localises to the cell membrane. The protein resides in the cell junction. It is found in the gap junction. In terms of biological role, one gap junction consists of a cluster of closely packed pairs of transmembrane channels, the connexons, through which materials of low MW diffuse from one cell to a neighboring cell. This chain is Gap junction alpha-4 protein (Gja4), found in Rattus norvegicus (Rat).